Here is a 427-residue protein sequence, read N- to C-terminus: Serine hydroxymethyltransferase (427 aa).

(6S)-5,6,7,8-tetrahydrofolate contacts are provided by residues leucine 118 and 122-124 (GHL). An N6-(pyridoxal phosphate)lysine modification is found at lysine 227. 351 to 353 (SPF) is a binding site for (6S)-5,6,7,8-tetrahydrofolate.

The protein belongs to the SHMT family. In terms of assembly, homodimer. Requires pyridoxal 5'-phosphate as cofactor.

The protein resides in the cytoplasm. It carries out the reaction (6R)-5,10-methylene-5,6,7,8-tetrahydrofolate + glycine + H2O = (6S)-5,6,7,8-tetrahydrofolate + L-serine. Its pathway is one-carbon metabolism; tetrahydrofolate interconversion. It participates in amino-acid biosynthesis; glycine biosynthesis; glycine from L-serine: step 1/1. Functionally, catalyzes the reversible interconversion of serine and glycine with tetrahydrofolate (THF) serving as the one-carbon carrier. This reaction serves as the major source of one-carbon groups required for the biosynthesis of purines, thymidylate, methionine, and other important biomolecules. Also exhibits THF-independent aldolase activity toward beta-hydroxyamino acids, producing glycine and aldehydes, via a retro-aldol mechanism. In Thermotoga petrophila (strain ATCC BAA-488 / DSM 13995 / JCM 10881 / RKU-1), this protein is Serine hydroxymethyltransferase.